Here is a 377-residue protein sequence, read N- to C-terminus: NAC domain-containing protein 76 (377 aa).

Residues 10 to 159 (VPPGFRFHPT…GWVVCRAFKK (150 aa)) enclose the NAC domain. A DNA-binding region spans residues 110-165 (IGMRKTLVFYKGRAPNGQKTDWIMHEYRLESDENAPPQEEGWVVCRAFKKKPMTGQ). Positions 312-347 (GVSGFGGHHEEDNNKIGHYNNEESNNKGSVETASST) are disordered. The segment covering 318–336 (GHHEEDNNKIGHYNNEESN) has biased composition (basic and acidic residues). Positions 337-347 (NKGSVETASST) are enriched in polar residues.

The protein belongs to the plant vascular related NAC-domain protein family. As to quaternary structure, interacts with NAC030/VND7. As to expression, detected in root protoxylem and metaxylem poles and in vessels of protoxylems, outermost metaxylems, inner metaxylems, shoots and hypocotyls. Expressed in roots, hypocotyls, cotyledons and leaves. Present in developing xylems. Specifically expressed in vessels but not in interfascicular fibers in stems.

The protein localises to the nucleus. In terms of biological role, transcription activator that binds to the secondary wall NAC binding element (SNBE), 5'-(T/A)NN(C/T)(T/C/G)TNNNNNNNA(A/C)GN(A/C/T)(A/T)-3', in the promoter of target genes. Involved in xylem formation by promoting the expression of secondary wall-associated transcription factors and of genes involved in secondary wall biosynthesis and programmed cell death, genes driven by the secondary wall NAC binding element (SNBE). Triggers thickening of secondary walls. This Arabidopsis thaliana (Mouse-ear cress) protein is NAC domain-containing protein 76.